A 467-amino-acid chain; its full sequence is ATP-dependent protease ATPase subunit HslU (467 aa).

ATP is bound by residues V22 and 64-69 (GVGKTE). Residues 149-192 (QTNNPLESLFGGAIPNFGQNNEDEEEPPTEEIKTKRSEIKRQLE) are disordered. Basic and acidic residues predominate over residues 178–192 (EEIKTKRSEIKRQLE). 3 residues coordinate ATP: D280, E345, and R417.

It belongs to the ClpX chaperone family. HslU subfamily. A double ring-shaped homohexamer of HslV is capped on each side by a ring-shaped HslU homohexamer. The assembly of the HslU/HslV complex is dependent on binding of ATP.

It localises to the cytoplasm. Its function is as follows. ATPase subunit of a proteasome-like degradation complex; this subunit has chaperone activity. The binding of ATP and its subsequent hydrolysis by HslU are essential for unfolding of protein substrates subsequently hydrolyzed by HslV. HslU recognizes the N-terminal part of its protein substrates and unfolds these before they are guided to HslV for hydrolysis. In Staphylococcus aureus (strain MRSA252), this protein is ATP-dependent protease ATPase subunit HslU.